The sequence spans 291 residues: Tyrosine-protein kinase PtkA (291 aa).

The disordered stretch occupies residues 1–79 (MSSPRERRPA…RRASSPGESP (79 aa)). Over residues 23–60 (HQTSRSSPDTTAPTGSGLSNRFVNDNGIVTDTTASGTN) the composition is skewed to polar residues. Y262 carries the phosphotyrosine modification.

Belongs to the HAD-like hydrolase superfamily. CbbY/CbbZ/Gph/YieH family. As to quaternary structure, interacts with PtpA. Post-translationally, autophosphorylated.

The catalysed reaction is L-tyrosyl-[protein] + ATP = O-phospho-L-tyrosyl-[protein] + ADP + H(+). Functionally, required for growth within macrophages. Catalyzes the phosphorylation of PtpA on the tyrosine residues at positions 128 and 129, thereby increasing PtpA phosphatase activity and promoting pathogenicity. The protein is Tyrosine-protein kinase PtkA of Mycobacterium bovis (strain ATCC BAA-935 / AF2122/97).